A 1173-amino-acid polypeptide reads, in one-letter code: WASH complex subunit 4 (1173 aa).

At Ala2 the chain carries N-acetylalanine. Position 7 is a phosphoserine (Ser7). Positions 705 to 1173 (KDLALFFSLN…STVSADPVVK (469 aa)) are sufficient for interaction with WASHC5. Positions 1135 to 1161 (RADKTAAEENQEKKEKEEETKTSNGDL) form a coiled coil. The span at 1142-1155 (EENQEKKEKEEETK) shows a compositional bias: basic and acidic residues. The disordered stretch occupies residues 1142 to 1173 (EENQEKKEKEEETKTSNGDLSDSTVSADPVVK). Phosphothreonine is present on Thr1154. Over residues 1157–1167 (SNGDLSDSTVS) the composition is skewed to polar residues.

It belongs to the SWIP family. Component of the WASH core complex also described as WASH regulatory complex (SHRC) composed of WASH (WASHC1, WASH2P or WASH3P), WASHC2 (WASHC2A or WASHC2C), WASHC3, WASHC4 and WASHC5. The WASH core complex associates via WASHC2 with the F-actin-capping protein dimer (formed by CAPZA1, CAPZA2 or CAPZA3 and CAPZB) in a transient or substoichiometric manner which was initially described as WASH complex.

Its subcellular location is the early endosome. In terms of biological role, acts as a component of the WASH core complex that functions as a nucleation-promoting factor (NPF) at the surface of endosomes, where it recruits and activates the Arp2/3 complex to induce actin polymerization, playing a key role in the fission of tubules that serve as transport intermediates during endosome sorting. The polypeptide is WASH complex subunit 4 (Homo sapiens (Human)).